A 547-amino-acid polypeptide reads, in one-letter code: uncharacterized protein (547 aa).

A disordered region spans residues 1–37; the sequence is MSAASSAIPKRSDPRLLDQKKSAKSTLPKNTPENGVS. Basic and acidic residues predominate over residues 10–21; that stretch reads KRSDPRLLDQKK. The segment covering 24 to 37 has biased composition (polar residues); it reads KSTLPKNTPENGVS. C3H1-type zinc fingers lie at residues 41–67 and 68–95; these read NLQH…SHSL and ETER…HALP. Residues 132–176 form a disordered region; sequence SPSLSSKTMKNPADKANNTTATDVRGNTATSPYFPFSRSPGRHSG. Residues 147-162 are compositionally biased toward polar residues; it reads ANNTTATDVRGNTATS. Ser343 is modified (phosphoserine). Tyr344 carries the phosphotyrosine modification. Ser353, Ser355, Ser483, Ser489, Ser495, and Ser499 each carry phosphoserine. The residue at position 502 (Thr502) is a Phosphothreonine. Residues 526 to 536 are compositionally biased toward polar residues; it reads VANSSPPWNST. The interval 526-547 is disordered; the sequence is VANSSPPWNSTVEEETPFQMDD. The segment covering 537-547 has biased composition (acidic residues); that stretch reads VEEETPFQMDD.

This is an uncharacterized protein from Schizosaccharomyces pombe (strain 972 / ATCC 24843) (Fission yeast).